A 530-amino-acid chain; its full sequence is Ataxin-10 homolog (530 aa).

It belongs to the ataxin-10 family.

The protein localises to the cytoplasm. In terms of biological role, may play a role in the regulation of cytokinesis. The sequence is that of Ataxin-10 homolog (CTR86) from Candida glabrata (strain ATCC 2001 / BCRC 20586 / JCM 3761 / NBRC 0622 / NRRL Y-65 / CBS 138) (Yeast).